The primary structure comprises 255 residues: Diphthine synthase (255 aa).

Residues Leu-9, Asp-85, Val-88, 113 to 114 (SI), Leu-164, Ala-207, and His-232 each bind S-adenosyl-L-methionine.

It belongs to the diphthine synthase family. As to quaternary structure, homodimer.

It carries out the reaction 2-[(3S)-amino-3-carboxypropyl]-L-histidyl-[translation elongation factor 2] + 3 S-adenosyl-L-methionine = diphthine-[translation elongation factor 2] + 3 S-adenosyl-L-homocysteine + 3 H(+). The protein operates within protein modification; peptidyl-diphthamide biosynthesis. In terms of biological role, S-adenosyl-L-methionine-dependent methyltransferase that catalyzes the trimethylation of the amino group of the modified target histidine residue in translation elongation factor 2 (EF-2), to form an intermediate called diphthine. The three successive methylation reactions represent the second step of diphthamide biosynthesis. This is Diphthine synthase from Methanococcus vannielii (strain ATCC 35089 / DSM 1224 / JCM 13029 / OCM 148 / SB).